Here is a 409-residue protein sequence, read N- to C-terminus: MEEYLNPINIFSEIGRLKKVLLHRPGEELENLTPFIMKNFLFDDIPYLEVARQEHEVFASILKNNLVEIEYIEDLISEVLVSSVALENKFISQFILEAEIKTDFTINLLKDYFSSLTIDNMISKMISGVVTEELKNYTSSLDDLVNGANLFIIDPMPNVLFTRDPFASIGNGVTINKMFTKVRQRETIFAEYIFKYHPVYKENVPIWLNRWEEASLEGGDELVLNKGLLVIGISERTEAKSVEKLAISLFKNKTSFDTILAFQIPKNRSYMHLDTVFTQIDYSVFTSFTSDDMYFSIYVLTYNPSSSKIHIKKEKARIKDVLSFYLGRKIDIIKCAGGDLIHGAREQWNDGANVLAIAPGEIIAYSRNHVTNKLFEENGIKVHRIPSSELSRGRGGPRCMSMPLIREDI.

Cys-399 serves as the catalytic Amidino-cysteine intermediate.

This sequence belongs to the arginine deiminase family.

It is found in the cytoplasm. The catalysed reaction is L-arginine + H2O = L-citrulline + NH4(+). It functions in the pathway amino-acid degradation; L-arginine degradation via ADI pathway; carbamoyl phosphate from L-arginine: step 1/2. This is Arginine deiminase (arcA) from Borreliella afzelii (Borrelia afzelii).